We begin with the raw amino-acid sequence, 296 residues long: uncharacterized protein (296 aa).

The stretch at 129–170 forms a coiled coil; it reads VKELKDLIRTVADEHMKMKREHEAAMKELTLLINNQKQQQQQ. Residues 165 to 187 are disordered; sequence KQQQQQPVPMPRNSTATRPKNLA.

This is an uncharacterized protein from Ostreid herpesvirus 1 (isolate France) (OsHV-1).